Consider the following 160-residue polypeptide: Cyclic pyranopterin monophosphate synthase (160 aa).

Substrate contacts are provided by residues 74-76 (LSH) and 112-113 (ME). D127 is an active-site residue.

The protein belongs to the MoaC family. In terms of assembly, homohexamer; trimer of dimers.

It carries out the reaction (8S)-3',8-cyclo-7,8-dihydroguanosine 5'-triphosphate = cyclic pyranopterin phosphate + diphosphate. It functions in the pathway cofactor biosynthesis; molybdopterin biosynthesis. Its function is as follows. Catalyzes the conversion of (8S)-3',8-cyclo-7,8-dihydroguanosine 5'-triphosphate to cyclic pyranopterin monophosphate (cPMP). This Geobacter sulfurreducens (strain ATCC 51573 / DSM 12127 / PCA) protein is Cyclic pyranopterin monophosphate synthase.